The sequence spans 1486 residues: Chromosome partition protein MukB (1486 aa).

Position 34–41 (G34–S41) interacts with ATP. Coiled-coil stretches lie at residues L326–Q418, L444–Q480, and R509–V603. The segment at P666 to R783 is flexible hinge. Coiled-coil stretches lie at residues E835–E923, E977–A1115, and V1209–S1266.

Belongs to the SMC family. MukB subfamily. In terms of assembly, homodimerization via its hinge domain. Binds to DNA via its C-terminal region. Interacts, and probably forms a ternary complex, with MukE and MukF via its C-terminal region. The complex formation is stimulated by calcium or magnesium. Interacts with tubulin-related protein FtsZ.

Its subcellular location is the cytoplasm. It localises to the nucleoid. Functionally, plays a central role in chromosome condensation, segregation and cell cycle progression. Functions as a homodimer, which is essential for chromosome partition. Involved in negative DNA supercoiling in vivo, and by this means organize and compact chromosomes. May achieve or facilitate chromosome segregation by condensation DNA from both sides of a centrally located replisome during cell division. The polypeptide is Chromosome partition protein MukB (Escherichia coli O6:K15:H31 (strain 536 / UPEC)).